Here is a 172-residue protein sequence, read N- to C-terminus: MAINFEELHPQEQAELERNIFFTTLEQIKGWARSNSLWPMTFGLACCAIEMMGVGSSHYDLDRFGSFFRTSPRQSDVMIVSGTVTKKMAPIVRRLYDQMPEPKWVIAMGSCATAGGPYVNSYAVVKGVDQIVPVDVYIPGCPPNPAALIYGINKLKEKIRYEAKTGKQVTNK.

Positions 46, 47, 111, and 141 each coordinate [4Fe-4S] cluster.

It belongs to the complex I 20 kDa subunit family. In terms of assembly, NDH-1 is composed of 14 different subunits. Subunits NuoB, C, D, E, F, and G constitute the peripheral sector of the complex. It depends on [4Fe-4S] cluster as a cofactor.

The protein localises to the cell membrane. It catalyses the reaction a quinone + NADH + 5 H(+)(in) = a quinol + NAD(+) + 4 H(+)(out). In terms of biological role, NDH-1 shuttles electrons from NADH, via FMN and iron-sulfur (Fe-S) centers, to quinones in the respiratory chain. The immediate electron acceptor for the enzyme in this species is believed to be a menaquinone. Couples the redox reaction to proton translocation (for every two electrons transferred, four hydrogen ions are translocated across the cytoplasmic membrane), and thus conserves the redox energy in a proton gradient. This Bacillus cytotoxicus (strain DSM 22905 / CIP 110041 / 391-98 / NVH 391-98) protein is NADH-quinone oxidoreductase subunit B.